The sequence spans 99 residues: Nucleoid-associated protein str1598 (99 aa).

The protein belongs to the YbaB/EbfC family. As to quaternary structure, homodimer.

Its subcellular location is the cytoplasm. It localises to the nucleoid. In terms of biological role, binds to DNA and alters its conformation. May be involved in regulation of gene expression, nucleoid organization and DNA protection. The chain is Nucleoid-associated protein str1598 from Streptococcus thermophilus (strain CNRZ 1066).